Consider the following 377-residue polypeptide: Chaperone protein DnaJ (377 aa).

The 66-residue stretch at Asp-5–Gly-70 folds into the J domain. The CR-type zinc finger occupies Gly-138–Glu-216. Zn(2+)-binding residues include Cys-151, Cys-154, Cys-168, Cys-171, Cys-190, Cys-193, Cys-204, and Cys-207. CXXCXGXG motif repeat units follow at residues Cys-151 to Gly-158, Cys-168 to Gly-175, Cys-190 to Gly-197, and Cys-204 to Gly-211.

This sequence belongs to the DnaJ family. In terms of assembly, homodimer. Requires Zn(2+) as cofactor.

It localises to the cytoplasm. Functionally, participates actively in the response to hyperosmotic and heat shock by preventing the aggregation of stress-denatured proteins and by disaggregating proteins, also in an autonomous, DnaK-independent fashion. Unfolded proteins bind initially to DnaJ; upon interaction with the DnaJ-bound protein, DnaK hydrolyzes its bound ATP, resulting in the formation of a stable complex. GrpE releases ADP from DnaK; ATP binding to DnaK triggers the release of the substrate protein, thus completing the reaction cycle. Several rounds of ATP-dependent interactions between DnaJ, DnaK and GrpE are required for fully efficient folding. Also involved, together with DnaK and GrpE, in the DNA replication of plasmids through activation of initiation proteins. The polypeptide is Chaperone protein DnaJ (Agrobacterium fabrum (strain C58 / ATCC 33970) (Agrobacterium tumefaciens (strain C58))).